A 159-amino-acid polypeptide reads, in one-letter code: Ribosome maturation factor RimP (159 aa).

This sequence belongs to the RimP family.

Its subcellular location is the cytoplasm. Required for maturation of 30S ribosomal subunits. The polypeptide is Ribosome maturation factor RimP (Lacticaseibacillus casei (strain BL23) (Lactobacillus casei)).